We begin with the raw amino-acid sequence, 591 residues long: MQRDAIAAARNAGCSSGRISQPPPPPFYSAATGIYSSIHPPVALPTDPSLTLVAHLFARLPLADPGAPTLVDAATASAVSRADLRRLVASLAAGLRRRHGVRKGSVVLLLLPNSVAFPVSFLAVLAAGAVATTMNPSSSPAEIAAQARATGACLVLASRDGAARLPPLAAPVVLVPEILDHSAAADDGDDDQRVFAAFRAMLDGGGGDGTETAVPVVGQDDAVAILYSSGTSGRSKGVVLTHRNLIAMTELFVRFEASQYHARGARENVYMAALPMSHVYGLSLFAVGLLSIGATVVVMRRFDAGDAVAAIGRYKVTHMPLVPPIMAAMVRAAAAGGVPPSQVASLVQVSCGAAPITAALIHEFLQAFPHVDFIQGYGMTESTAVGTRGFNTSKHKKYTSVGLLAPNMHAKIVHLESSSCLPPGFSGELWLHGPGIMKGYLSDDDDACTRKDGWLRTGDIAYFDLDGYLYIVGRLKDTIKYKGFQIAPGDLEEVLIHHPEILDVAVTSAEDEEAGEIPVAFVVRRSGSNLSCKQVMEYVAKQVAPYKRVRKVVFVEAIPKSPAGKVLRRLLRNSHDTAAAATSSCSISSKL.

ATP contacts are provided by serine 228, serine 229, glycine 230, threonine 231, serine 232, and lysine 236. Residue tyrosine 280 coordinates (E)-4-coumaroyl-AMP. Arginine 301 provides a ligand contact to CoA. Positions 303-375 (DAGDAVAAIG…QAFPHVDFIQ (73 aa)) are SBD1. (E)-4-coumaroyl-AMP contacts are provided by alanine 353, glutamine 375, glycine 376, and threonine 380. Positions 375, 376, 380, 459, and 474 each coordinate ATP. The interval 376 to 440 (GYGMTESTAV…LHGPGIMKGY (65 aa)) is SBD2. (E)-4-coumaroyl-AMP is bound by residues lysine 476 and lysine 480. The CoA site is built by lysine 482 and glycine 483. Lysine 565 is an ATP binding site.

Belongs to the ATP-dependent AMP-binding enzyme family. It depends on Mg(2+) as a cofactor.

The catalysed reaction is (E)-4-coumarate + ATP + CoA = (E)-4-coumaroyl-CoA + AMP + diphosphate. It carries out the reaction (E)-4-coumarate + ATP + H(+) = (E)-4-coumaroyl-AMP + diphosphate. The enzyme catalyses (E)-4-coumaroyl-AMP + CoA = (E)-4-coumaroyl-CoA + AMP + H(+). In terms of biological role, carboxylate--CoA ligase that may use 4-coumarate as substrate. Follows a two-step reaction mechanism, wherein the carboxylate substrate first undergoes adenylation by ATP, followed by a thioesterification in the presence of CoA to yield the final CoA thioester. This Oryza sativa subsp. japonica (Rice) protein is 4-coumarate--CoA ligase-like 3 (4CLL3).